Consider the following 434-residue polypeptide: Asparagine--tRNA ligase (434 aa).

This sequence belongs to the class-II aminoacyl-tRNA synthetase family.

It is found in the cytoplasm. The catalysed reaction is tRNA(Asn) + L-asparagine + ATP = L-asparaginyl-tRNA(Asn) + AMP + diphosphate + H(+). In Pyrococcus furiosus (strain ATCC 43587 / DSM 3638 / JCM 8422 / Vc1), this protein is Asparagine--tRNA ligase (asnS).